Consider the following 134-residue polypeptide: Transcription factor atoh7 (134 aa).

A disordered region spans residues 1–27; that stretch reads MKPRRPSCADSGSDSDSRDPEKFESAM. Residues 15–27 are compositionally biased toward basic and acidic residues; that stretch reads SDSRDPEKFESAM. The bHLH domain maps to 28–80; that stretch reads RRRMAANARERKRMQGLNTAFDRLRKVVPQWGQDKKLSKYETLQMALSYIMAL.

Its subcellular location is the nucleus. It localises to the perikaryon. The protein localises to the cell projection. It is found in the axon. Transcription factor that binds to DNA at the consensus sequence 5'-CAG[GC]TG-3'. Involved in the differentiation of retinal ganglion cells, photoreceptor population and optic nerve development. Required for retinal circadian rhythm photoentrainment. The chain is Transcription factor atoh7 from Danio rerio (Zebrafish).